Consider the following 287-residue polypeptide: Succinate dehydrogenase [ubiquinone] iron-sulfur subunit, mitochondrial (287 aa).

The transit peptide at 1-23 (MISNVLKRASVLARSNGIQSAFY) directs the protein to the mitochondrion. A 2Fe-2S ferredoxin-type domain is found at 51–140 (FQVYRYNEET…GDTVKVYPLP (90 aa)). Residues cysteine 101, cysteine 106, cysteine 109, and cysteine 121 each coordinate [2Fe-2S] cluster. One can recognise a 4Fe-4S ferredoxin-type domain in the interval 186–216 (NRHKLDGLYECILCACCSTSCPSYWWSEGGD). Positions 196, 199, and 202 each coordinate [4Fe-4S] cluster. Cysteine 206 contributes to the [3Fe-4S] cluster binding site. Tryptophan 211 is a binding site for a ubiquinone. 2 residues coordinate [3Fe-4S] cluster: cysteine 257 and cysteine 263. Cysteine 267 is a [4Fe-4S] cluster binding site.

This sequence belongs to the succinate dehydrogenase/fumarate reductase iron-sulfur protein family. In terms of assembly, component of complex II composed of four subunits: the flavoprotein (FP) SDHA, iron-sulfur protein (IP) SDHB, and a cytochrome b composed of a large and a small subunit. [2Fe-2S] cluster is required as a cofactor. [3Fe-4S] cluster serves as cofactor. It depends on [4Fe-4S] cluster as a cofactor.

Its subcellular location is the mitochondrion inner membrane. The catalysed reaction is a quinone + succinate = fumarate + a quinol. Its pathway is carbohydrate metabolism; tricarboxylic acid cycle; fumarate from succinate (eukaryal route): step 1/1. Functionally, iron-sulfur protein (IP) subunit of succinate dehydrogenase (SDH) that is involved in complex II of the mitochondrial electron transport chain and is responsible for transferring electrons from succinate to ubiquinone (coenzyme Q). The protein is Succinate dehydrogenase [ubiquinone] iron-sulfur subunit, mitochondrial (sdhB) of Dictyostelium discoideum (Social amoeba).